The following is a 467-amino-acid chain: Glutamyl-tRNA reductase (467 aa).

Residues 49 to 52, serine 109, 114 to 116, and glutamine 120 each bind substrate; these read TCNR and EQQ. Catalysis depends on cysteine 50, which acts as the Nucleophile. 189 to 194 contacts NADP(+); that stretch reads GAGAMG. Positions 446-467 are disordered; the sequence is GFSDTTRYGTSPAQSSSKYHAE. A compositionally biased stretch (polar residues) spans 447-467; the sequence is FSDTTRYGTSPAQSSSKYHAE.

Belongs to the glutamyl-tRNA reductase family. In terms of assembly, homodimer.

It catalyses the reaction (S)-4-amino-5-oxopentanoate + tRNA(Glu) + NADP(+) = L-glutamyl-tRNA(Glu) + NADPH + H(+). Its pathway is porphyrin-containing compound metabolism; protoporphyrin-IX biosynthesis; 5-aminolevulinate from L-glutamyl-tRNA(Glu): step 1/2. In terms of biological role, catalyzes the NADPH-dependent reduction of glutamyl-tRNA(Glu) to glutamate 1-semialdehyde (GSA). The chain is Glutamyl-tRNA reductase from Mycobacterium leprae (strain TN).